A 242-amino-acid polypeptide reads, in one-letter code: MAVLRSLLPQLGLFLCLALCFSPALSASYNDPCTVFDTISTTNLRVNITAEGSGENITYTVWVHVNSSVSVVILKAVNQDNKPVGTWVGATQECNDSSVLYRVTPSDNSDFQATWIVPNSEDITKVNLHVLMAIGNGTAAVTSVNLGEPQTSTPLRPTPEISETNQTTTMTTDKTPAMTTAKTPAMTTAKTTAKTTAKTTVKTTAMTTAKTTAKSLAVNALGSPLAGALHILLVFLISKLLF.

The first 26 residues, 1–26 (MAVLRSLLPQLGLFLCLALCFSPALS), serve as a signal peptide directing secretion. N-linked (GlcNAc...) asparagine glycosylation is found at Asn47, Asn56, and Asn66. Ser223 carries the GPI-anchor amidated serine lipid modification. Positions 224–242 (PLAGALHILLVFLISKLLF) are cleaved as a propeptide — removed in mature form.

Post-translationally, N-glycosylated. GPI-anchored. Present at high level in the dermal sheath cells near the bulge area of the hair follicle and in the differentiated sebocytes of the normal adult skin (at protein level).

The protein localises to the apical cell membrane. Modulates leading keratinocyte migration and cellular adhesion to matrix proteins during a wound-healing response and promotes wound repair. May play a role during trichilemmal differentiation of the hair follicle. The sequence is that of Placenta-expressed transcript 1 protein (PLET1) from Mesocricetus auratus (Golden hamster).